The primary structure comprises 533 residues: Peptide chain release factor 3 (533 aa).

In terms of domain architecture, tr-type G spans 9–284 (ARRRTFAIIS…ALCQLSPPPL (276 aa)). GTP-binding positions include 18–25 (SHPDAGKT), 95–99 (DTPGH), and 149–152 (NKLD).

The protein belongs to the TRAFAC class translation factor GTPase superfamily. Classic translation factor GTPase family. PrfC subfamily.

The protein resides in the cytoplasm. Increases the formation of ribosomal termination complexes and stimulates activities of RF-1 and RF-2. It binds guanine nucleotides and has strong preference for UGA stop codons. It may interact directly with the ribosome. The stimulation of RF-1 and RF-2 is significantly reduced by GTP and GDP, but not by GMP. This chain is Peptide chain release factor 3, found in Cupriavidus pinatubonensis (strain JMP 134 / LMG 1197) (Cupriavidus necator (strain JMP 134)).